Consider the following 161-residue polypeptide: ATP synthase subunit b (161 aa).

A helical transmembrane segment spans residues 10–29 (AVVQLLNFLFLLWILNKLLY).

The protein belongs to the ATPase B chain family. As to quaternary structure, F-type ATPases have 2 components, F(1) - the catalytic core - and F(0) - the membrane proton channel. F(1) has five subunits: alpha(3), beta(3), gamma(1), delta(1), epsilon(1). F(0) has three main subunits: a(1), b(2) and c(10-14). The alpha and beta chains form an alternating ring which encloses part of the gamma chain. F(1) is attached to F(0) by a central stalk formed by the gamma and epsilon chains, while a peripheral stalk is formed by the delta and b chains.

The protein localises to the cell inner membrane. F(1)F(0) ATP synthase produces ATP from ADP in the presence of a proton or sodium gradient. F-type ATPases consist of two structural domains, F(1) containing the extramembraneous catalytic core and F(0) containing the membrane proton channel, linked together by a central stalk and a peripheral stalk. During catalysis, ATP synthesis in the catalytic domain of F(1) is coupled via a rotary mechanism of the central stalk subunits to proton translocation. Its function is as follows. Component of the F(0) channel, it forms part of the peripheral stalk, linking F(1) to F(0). This chain is ATP synthase subunit b, found in Fervidobacterium nodosum (strain ATCC 35602 / DSM 5306 / Rt17-B1).